Reading from the N-terminus, the 283-residue chain is NFU1 iron-sulfur cluster scaffold homolog, mitochondrial (283 aa).

The N-terminal 30 residues, 1-30 (MSKFLSQAALNTLRNTRLGSRQLVRSFAGI), are a transit peptide targeting the mitochondrion. The tract at residues 182 to 250 (IKELLDTRIR…IPEVESVEQV (69 aa)) is nifU. Residues C219 and C222 each contribute to the [4Fe-4S] cluster site.

The protein belongs to the NifU family.

It is found in the mitochondrion. In terms of biological role, molecular scaffold for [Fe-S] cluster assembly of mitochondrial iron-sulfur proteins. The protein is NFU1 iron-sulfur cluster scaffold homolog, mitochondrial of Drosophila erecta (Fruit fly).